The following is a 105-amino-acid chain: Met repressor (105 aa).

It belongs to the MetJ family. As to quaternary structure, homodimer.

The protein resides in the cytoplasm. Functionally, this regulatory protein, when combined with SAM (S-adenosylmethionine) represses the expression of the methionine regulon and of enzymes involved in SAM synthesis. This Klebsiella pneumoniae subsp. pneumoniae (strain ATCC 700721 / MGH 78578) protein is Met repressor.